The chain runs to 940 residues: MDKIEVRGARTHNLKDINLTIPRDKLTVITGLSGSGKSSLAFDTLYAEGQRRYVESLSAYARQFLSLMEKPDVDHIEGLSPAISIEQKSTSHNPRSTVGTITEVYDYLRLLYARVGEPRCPTHHAPLAAQTVSQMVDKVLELPEGSKMMLLAPIVKERKGEHVKTLENLAAQGFIRARIDGETCDLSDPPTLELHKKHTIEVVVDRFKVRPDLQQRLAESFETTLELSGGIAVVAPMDGDGEEIIFSANFACPQCGYSMQELEPRLFSFNNPAGACGTCDGLGVQQYFDPSRVIQDDSLSLAQGAIRGWDQKNYYYFQMLTSLADHYGFDLHAPFNSLPKKTQDVILKGSGRTEIEFKYINDRGDIRVKRHPFEGILNTLERRYRDTESNSVREELAKYISTKSCSSCGGTRLRLEARNVFIADTTLPEIVELSIADALTFFQTLKLEGQRAQIAEKVMKEINDRLQFLVNVGLNYLNLSRSAETLSGGEAQRIRLASQIGAGLVGVMYVLDEPSIGLHQRDNERLLKTLTHLRDLGNTVLVVEHDEDAIRCADHVIDIGPGAGVHGGNVVAEGTMDEIIANPNSLTGQYLSGAKEIAVPKERTPRDPKKTVELLGATGNNLKNVDLSIPVGLFSCITGVSGSGKSTLINDTFFKIAHTQLNGATTAHPSPYKSIKGLEHFDKVIDIDQSPIGRTPRSNPATYTGIFTPIRELFAGTQESRSRGYKPGRFSFNVRGGRCEACQGDGVIKVEMHFLPDVYVPCDVCKGKRYNRETLEVRYKGKTIDEVLEMTVEDARTFFDPVPAIARKLQTLMDVGLSYIRLGQAATTLSGGEAQRVKLARELSKRDTGKTLYILDEPTTGLHFHDIQQLLTVLHRLRDHGNTVVVIEHNLDVIKTADWIIDLGPEGGQGGGEIIAQGTPEDVSQIEGSHTARFLKPMLK.

G31–S38 serves as a coordination point for ATP. The C4-type zinc finger occupies C252 to C279. ABC transporter domains lie at W309 to L586 and R606 to K936. G639–S646 contributes to the ATP binding site. The C4-type zinc finger occupies C739–C765.

It belongs to the ABC transporter superfamily. UvrA family. Forms a heterotetramer with UvrB during the search for lesions.

Its subcellular location is the cytoplasm. The UvrABC repair system catalyzes the recognition and processing of DNA lesions. UvrA is an ATPase and a DNA-binding protein. A damage recognition complex composed of 2 UvrA and 2 UvrB subunits scans DNA for abnormalities. When the presence of a lesion has been verified by UvrB, the UvrA molecules dissociate. In Vibrio parahaemolyticus serotype O3:K6 (strain RIMD 2210633), this protein is UvrABC system protein A.